The following is a 182-amino-acid chain: MALSREEVAARYGTALFGYAQDNKVLDTVYDEMMALKKAAIANPKFISVLSDPILSSKDKKSILTAVEKDFSDEVQGFLNLLLEYNRFADLIDIIDQFSLLYDNENKIASGTATTAVKLDDDQLERLSESFAKKYDLNAVRLENKVDPSILGGVILQVKDRVIDGSVKNKLKKIRAQIIDEN.

This sequence belongs to the ATPase delta chain family. In terms of assembly, F-type ATPases have 2 components, F(1) - the catalytic core - and F(0) - the membrane proton channel. F(1) has five subunits: alpha(3), beta(3), gamma(1), delta(1), epsilon(1). F(0) has three main subunits: a(1), b(2) and c(10-14). The alpha and beta chains form an alternating ring which encloses part of the gamma chain. F(1) is attached to F(0) by a central stalk formed by the gamma and epsilon chains, while a peripheral stalk is formed by the delta and b chains.

It is found in the cell membrane. Its activity is regulated as follows. Increases 2-fold following exposure to low pH. F(1)F(0) ATP synthase produces ATP from ADP in the presence of a proton or sodium gradient. F-type ATPases consist of two structural domains, F(1) containing the extramembraneous catalytic core and F(0) containing the membrane proton channel, linked together by a central stalk and a peripheral stalk. During catalysis, ATP synthesis in the catalytic domain of F(1) is coupled via a rotary mechanism of the central stalk subunits to proton translocation. In terms of biological role, this protein is part of the stalk that links CF(0) to CF(1). It either transmits conformational changes from CF(0) to CF(1) or is implicated in proton conduction. The sequence is that of ATP synthase subunit delta from Lactobacillus acidophilus (strain ATCC 700396 / NCK56 / N2 / NCFM).